We begin with the raw amino-acid sequence, 123 residues long: Small ribosomal subunit protein uS12 (123 aa).

D89 is modified (3-methylthioaspartic acid). The tract at residues 104-123 (TAGVQDRRQGRSKYGAKRPK) is disordered. Over residues 113–123 (GRSKYGAKRPK) the composition is skewed to basic residues.

This sequence belongs to the universal ribosomal protein uS12 family. In terms of assembly, part of the 30S ribosomal subunit. Contacts proteins S8 and S17. May interact with IF1 in the 30S initiation complex.

Functionally, with S4 and S5 plays an important role in translational accuracy. Its function is as follows. Interacts with and stabilizes bases of the 16S rRNA that are involved in tRNA selection in the A site and with the mRNA backbone. Located at the interface of the 30S and 50S subunits, it traverses the body of the 30S subunit contacting proteins on the other side and probably holding the rRNA structure together. The combined cluster of proteins S8, S12 and S17 appears to hold together the shoulder and platform of the 30S subunit. This is Small ribosomal subunit protein uS12 from Oleidesulfovibrio alaskensis (strain ATCC BAA-1058 / DSM 17464 / G20) (Desulfovibrio alaskensis).